The following is a 273-amino-acid chain: 3-methyl-2-oxobutanoate hydroxymethyltransferase (273 aa).

Residues Asp53 and Asp92 each contribute to the Mg(2+) site. 3-methyl-2-oxobutanoate is bound by residues 53–54, Asp92, and Lys122; that span reads DS. Position 124 (Glu124) interacts with Mg(2+). Glu191 functions as the Proton acceptor in the catalytic mechanism.

It belongs to the PanB family. Homodecamer; pentamer of dimers. It depends on Mg(2+) as a cofactor.

It localises to the cytoplasm. The catalysed reaction is 3-methyl-2-oxobutanoate + (6R)-5,10-methylene-5,6,7,8-tetrahydrofolate + H2O = 2-dehydropantoate + (6S)-5,6,7,8-tetrahydrofolate. It functions in the pathway cofactor biosynthesis; (R)-pantothenate biosynthesis; (R)-pantoate from 3-methyl-2-oxobutanoate: step 1/2. Catalyzes the reversible reaction in which hydroxymethyl group from 5,10-methylenetetrahydrofolate is transferred onto alpha-ketoisovalerate to form ketopantoate. This chain is 3-methyl-2-oxobutanoate hydroxymethyltransferase, found in Bacteroides thetaiotaomicron (strain ATCC 29148 / DSM 2079 / JCM 5827 / CCUG 10774 / NCTC 10582 / VPI-5482 / E50).